The following is a 253-amino-acid chain: Uridylate kinase (253 aa).

9-12 (KLSG) contacts ATP. Position 51 (glycine 51) interacts with UMP. ATP is bound by residues glycine 52 and arginine 56. Residues aspartate 72 and 133–140 (SGNPFFTT) contribute to the UMP site. ATP is bound by residues threonine 160, tyrosine 166, and aspartate 169.

The protein belongs to the UMP kinase family. Homohexamer.

Its subcellular location is the cytoplasm. The catalysed reaction is UMP + ATP = UDP + ADP. It participates in pyrimidine metabolism; CTP biosynthesis via de novo pathway; UDP from UMP (UMPK route): step 1/1. Inhibited by UTP. In terms of biological role, catalyzes the reversible phosphorylation of UMP to UDP. This is Uridylate kinase from Synechococcus sp. (strain JA-2-3B'a(2-13)) (Cyanobacteria bacterium Yellowstone B-Prime).